The sequence spans 379 residues: Homoserine O-succinyltransferase (379 aa).

An AB hydrolase-1 domain is found at 48-357 (NAVLICHALS…SAHGHDAFLM (310 aa)). The active-site Nucleophile is Ser-154. A substrate-binding site is contributed by Arg-224. Catalysis depends on residues Asp-319 and His-352. Residue Asp-353 coordinates substrate.

It belongs to the AB hydrolase superfamily. MetX family. Homodimer.

The protein localises to the cytoplasm. It carries out the reaction L-homoserine + succinyl-CoA = O-succinyl-L-homoserine + CoA. The protein operates within amino-acid biosynthesis; L-methionine biosynthesis via de novo pathway; O-succinyl-L-homoserine from L-homoserine: step 1/1. Functionally, transfers a succinyl group from succinyl-CoA to L-homoserine, forming succinyl-L-homoserine. This Neisseria gonorrhoeae (strain ATCC 700825 / FA 1090) protein is Homoserine O-succinyltransferase.